The following is a 165-amino-acid chain: Transmembrane protein 253 (165 aa).

Transmembrane regions (helical) follow at residues 31–51, 60–80, and 91–111; these read LVLA…AVSV, MTTA…IVTL, and LAGL…GVLV. The interval 145–165 is disordered; sequence EEVPELETGPTVASTAKRTNQ. The span at 155 to 165 shows a compositional bias: polar residues; that stretch reads TVASTAKRTNQ.

The protein localises to the membrane. The chain is Transmembrane protein 253 (TMEM253) from Bos taurus (Bovine).